The primary structure comprises 183 residues: ATP synthase subunit b, chloroplastic (183 aa).

A helical membrane pass occupies residues Leu27–Leu49.

The protein belongs to the ATPase B chain family. F-type ATPases have 2 components, F(1) - the catalytic core - and F(0) - the membrane proton channel. F(1) has five subunits: alpha(3), beta(3), gamma(1), delta(1), epsilon(1). F(0) has four main subunits: a(1), b(1), b'(1) and c(10-14). The alpha and beta chains form an alternating ring which encloses part of the gamma chain. F(1) is attached to F(0) by a central stalk formed by the gamma and epsilon chains, while a peripheral stalk is formed by the delta, b and b' chains.

Its subcellular location is the plastid. It localises to the chloroplast thylakoid membrane. Its function is as follows. F(1)F(0) ATP synthase produces ATP from ADP in the presence of a proton or sodium gradient. F-type ATPases consist of two structural domains, F(1) containing the extramembraneous catalytic core and F(0) containing the membrane proton channel, linked together by a central stalk and a peripheral stalk. During catalysis, ATP synthesis in the catalytic domain of F(1) is coupled via a rotary mechanism of the central stalk subunits to proton translocation. Functionally, component of the F(0) channel, it forms part of the peripheral stalk, linking F(1) to F(0). The polypeptide is ATP synthase subunit b, chloroplastic (Lolium perenne (Perennial ryegrass)).